The chain runs to 184 residues: MKIAQEIRAGNVIMQGKDPMIVLKTEYARGGRGAATVRMKLKALLSNMGTEVVFKADDKIDNVILDKKECTYSYFADPMYVWMDAEYNQYEVEASNMGDAISYLEDGMAAEVVFYDGKAISVELPTSVEREITWTEPAVKGDTSGKVLKPAKIATGFEVAVPLFVDQGDKIEIDTRTGEYRKRV.

It belongs to the elongation factor P family.

The protein localises to the cytoplasm. It participates in protein biosynthesis; polypeptide chain elongation. Its function is as follows. Involved in peptide bond synthesis. Stimulates efficient translation and peptide-bond synthesis on native or reconstituted 70S ribosomes in vitro. Probably functions indirectly by altering the affinity of the ribosome for aminoacyl-tRNA, thus increasing their reactivity as acceptors for peptidyl transferase. The sequence is that of Elongation factor P from Acidovorax ebreus (strain TPSY) (Diaphorobacter sp. (strain TPSY)).